The primary structure comprises 104 residues: Large ribosomal subunit protein uL24 (104 aa).

It belongs to the universal ribosomal protein uL24 family. In terms of assembly, part of the 50S ribosomal subunit.

Functionally, one of two assembly initiator proteins, it binds directly to the 5'-end of the 23S rRNA, where it nucleates assembly of the 50S subunit. In terms of biological role, one of the proteins that surrounds the polypeptide exit tunnel on the outside of the subunit. The sequence is that of Large ribosomal subunit protein uL24 from Yersinia enterocolitica serotype O:8 / biotype 1B (strain NCTC 13174 / 8081).